Here is a 281-residue protein sequence, read N- to C-terminus: Putative zinc-binding protein ORF11 (281 aa).

This is Putative zinc-binding protein ORF11 (ORF11) from Ictaluridae (bullhead catfishes).